The sequence spans 234 residues: S-adenosylmethionine synthase 1 (234 aa).

ATP contacts are provided by residues 10 to 12 (DGK), 78 to 81 (SGRF), aspartate 89, 95 to 96 (RK), alanine 112, lysine 116, and lysine 120. An L-methionine-binding site is contributed by aspartate 89. Lysine 120 is an L-methionine binding site.

The protein belongs to the AdoMet synthase family. As to quaternary structure, homotetramer. The cofactor is Mn(2+). Mg(2+) serves as cofactor. It depends on Co(2+) as a cofactor. K(+) is required as a cofactor. As to expression, mainly in floral buds and roots.

Its subcellular location is the cytoplasm. It carries out the reaction L-methionine + ATP + H2O = S-adenosyl-L-methionine + phosphate + diphosphate. The protein operates within amino-acid biosynthesis; S-adenosyl-L-methionine biosynthesis; S-adenosyl-L-methionine from L-methionine: step 1/1. Catalyzes the formation of S-adenosylmethionine from methionine and ATP. The reaction comprises two steps that are both catalyzed by the same enzyme: formation of S-adenosylmethionine (AdoMet) and triphosphate, and subsequent hydrolysis of the triphosphate. The polypeptide is S-adenosylmethionine synthase 1 (SMS-1) (Petroselinum crispum (Parsley)).